We begin with the raw amino-acid sequence, 158 residues long: Snaclec coagulation factor X-activating enzyme light chain 2 (158 aa).

The first 23 residues, 1-23 (MGRSISVSFGLLAVFLSLSGTGA), serve as a signal peptide directing secretion. 3 cysteine pairs are disulfide-bonded: Cys27–Cys38, Cys55–Cys152, and Cys127–Cys144. The region spanning 34–153 (YRYFCYRVFK…CEEPYPFVCK (120 aa)) is the C-type lectin domain.

It belongs to the snaclec family. In terms of assembly, heterotrimer; disulfide-linked. The heterotrimer consists of 1 heavy chain (a metalloproteinase) and 2 light chains: LC1 and LC2. Expressed by the venom gland.

The protein resides in the secreted. In terms of biological role, regulatory subunit of the blood coagulation factor X-activating enzyme. Activates coagulation factor X (F10) by cleaving the Arg-Ile bond at position 234, activates coagulation factor IX (F9) by cleaving the Arg-Val bond at position 226 and is also able to activate protein C (PROC). May serve as an exosite by which the enzyme recognizes and binds to the Gla domain of factor X (F10) in a calcium-dependent manner. This chain is Snaclec coagulation factor X-activating enzyme light chain 2 (LC2), found in Macrovipera lebetinus (Levantine viper).